We begin with the raw amino-acid sequence, 122 residues long: ATP-dependent Clp protease adapter protein ClpS (122 aa).

This sequence belongs to the ClpS family. In terms of assembly, binds to the N-terminal domain of the chaperone ClpA.

Functionally, involved in the modulation of the specificity of the ClpAP-mediated ATP-dependent protein degradation. The chain is ATP-dependent Clp protease adapter protein ClpS from Pseudomonas fluorescens (strain SBW25).